A 664-amino-acid chain; its full sequence is Putative carboxypeptidase suro-1 (664 aa).

Positions 1-23 are cleaved as a signal peptide; sequence MRYLCKSILLAVHTILLVGSVCC. Residues 24–110 constitute a propeptide, activation peptide; that stretch reads STDVHNTDDK…MSVPDVEKLI (87 aa). Residues 160–473 form the Peptidase M14 domain; that stretch reads DYASYADMVK…EGFREVVDAV (314 aa). Zn(2+)-binding residues include His-219 and Glu-222. Substrate-binding positions include 219–222, Arg-281, and 306–307; these read HARE and NR. Position 361 (His-361) interacts with Zn(2+). Residue 362–363 participates in substrate binding; that stretch reads SY. Catalysis depends on Glu-437, which acts as the Proton donor/acceptor. Over residues 512–543 the composition is skewed to low complexity; sequence ASQAAGSTTRSTTTLKTSTTSVSTTSEATSPS. Positions 512 to 590 are disordered; that stretch reads ASQAAGSTTR…TTTTEEEDVT (79 aa). Over residues 564-573 the composition is skewed to pro residues; it reads PTPPMAPPIM. The segment covering 574-583 has biased composition (low complexity); sequence SPSTEFSTTT. In terms of domain architecture, ShKT spans 621 to 657; that stretch reads CRDMRYSCGFWLKNNKQVCEEQQSFMRAQCAYTCKFC. 3 disulfides stabilise this stretch: Cys-621–Cys-657, Cys-628–Cys-650, and Cys-639–Cys-654.

It belongs to the peptidase M14 family. Zn(2+) serves as cofactor. In terms of tissue distribution, localizes in stripes along the cuticle.

Its subcellular location is the cytoplasmic vesicle. It localises to the secreted. Functionally, may play a role in processing or organization of cuticle collagen proteins, including rol-6 and col-19. The protein is Putative carboxypeptidase suro-1 of Caenorhabditis elegans.